A 242-amino-acid polypeptide reads, in one-letter code: Ribose-5-phosphate isomerase A (242 aa).

Substrate contacts are provided by residues 39–42 (SGST), 95–98 (DGAD), and 108–111 (KGGG). Catalysis depends on glutamate 117, which acts as the Proton acceptor. Substrate is bound at residue lysine 135.

Belongs to the ribose 5-phosphate isomerase family. As to quaternary structure, homodimer.

It catalyses the reaction aldehydo-D-ribose 5-phosphate = D-ribulose 5-phosphate. The protein operates within carbohydrate degradation; pentose phosphate pathway; D-ribose 5-phosphate from D-ribulose 5-phosphate (non-oxidative stage): step 1/1. In terms of biological role, catalyzes the reversible conversion of ribose-5-phosphate to ribulose 5-phosphate. This is Ribose-5-phosphate isomerase A from Chlamydia trachomatis serovar A (strain ATCC VR-571B / DSM 19440 / HAR-13).